The following is a 110-amino-acid chain: UPF0339 protein SO_3888 (110 aa).

Tandem repeats lie at residues 10–58 and 61–109.

Belongs to the UPF0339 family. Duplicated subfamily.

The polypeptide is UPF0339 protein SO_3888 (Shewanella oneidensis (strain ATCC 700550 / JCM 31522 / CIP 106686 / LMG 19005 / NCIMB 14063 / MR-1)).